The sequence spans 358 residues: GTPase Obg (358 aa).

The region spanning 1–159 is the Obg domain; sequence MKFLDEAKVY…RWIWLRLKLI (159 aa). Residues 160 to 327 enclose the OBG-type G domain; that stretch reads ADAGLVGLPN…VLRALVEVIG (168 aa). Residues 166 to 173, 191 to 195, 212 to 215, 279 to 282, and 308 to 310 each bind GTP; these read GLPNAGKS, FTTLH, DIPG, NKID, and SGV. Positions 173 and 193 each coordinate Mg(2+). The segment at 335–358 is disordered; it reads AKGADASAAQAMETPVARAKPWSP.

This sequence belongs to the TRAFAC class OBG-HflX-like GTPase superfamily. OBG GTPase family. As to quaternary structure, monomer. The cofactor is Mg(2+).

The protein localises to the cytoplasm. Its function is as follows. An essential GTPase which binds GTP, GDP and possibly (p)ppGpp with moderate affinity, with high nucleotide exchange rates and a fairly low GTP hydrolysis rate. Plays a role in control of the cell cycle, stress response, ribosome biogenesis and in those bacteria that undergo differentiation, in morphogenesis control. In Nitrobacter winogradskyi (strain ATCC 25391 / DSM 10237 / CIP 104748 / NCIMB 11846 / Nb-255), this protein is GTPase Obg.